The following is a 455-amino-acid chain: Chromosomal replication initiator protein DnaA (455 aa).

Residues 1 to 82 (MNRNTSSLWA…NPDFVVKLVE (82 aa)) form a domain I, interacts with DnaA modulators region. A domain II region spans residues 82-117 (EGVKPAPKQNNIVTTKQNAETAVDSEQHLQSVEFKT). The interval 118–335 (GLNSNHLFEN…GALNRVIANA (218 aa)) is domain III, AAA+ region. Positions 163, 165, 166, and 167 each coordinate ATP. The segment at 336 to 455 (EFTGKTITID…WSNLIRTLSA (120 aa)) is domain IV, binds dsDNA.

It belongs to the DnaA family. As to quaternary structure, oligomerizes as a right-handed, spiral filament on DNA at oriC.

It localises to the cytoplasm. In terms of biological role, plays an essential role in the initiation and regulation of chromosomal replication. ATP-DnaA binds to the origin of replication (oriC) to initiate formation of the DNA replication initiation complex once per cell cycle. Binds the DnaA box (a 9 base pair repeat at the origin) and separates the double-stranded (ds)DNA. Forms a right-handed helical filament on oriC DNA; dsDNA binds to the exterior of the filament while single-stranded (ss)DNA is stabiized in the filament's interior. The ATP-DnaA-oriC complex binds and stabilizes one strand of the AT-rich DNA unwinding element (DUE), permitting loading of DNA polymerase. After initiation quickly degrades to an ADP-DnaA complex that is not apt for DNA replication. Binds acidic phospholipids. This chain is Chromosomal replication initiator protein DnaA, found in Actinobacillus succinogenes (strain ATCC 55618 / DSM 22257 / CCUG 43843 / 130Z).